Reading from the N-terminus, the 240-residue chain is Izumo sperm-egg fusion protein 3 (240 aa).

The N-terminal stretch at 1 to 22 (MGDLWLLLLLPLSLAAFHGVKG) is a signal peptide. Topologically, residues 23-176 (CLECDPKFIE…DDPKKAESRE (154 aa)) are extracellular. A helical transmembrane segment spans residues 177 to 197 (IGLFLILLAEGVILGGVLLLF). Topologically, residues 198–240 (HFCISHQRKMKAIRRSLKTYLEKKLEELMGIKDEKEKDFRGRE) are cytoplasmic.

The protein belongs to the Izumo family. As to quaternary structure, monomer and homodimer.

Its subcellular location is the cell membrane. The chain is Izumo sperm-egg fusion protein 3 (IZUMO3) from Bos taurus (Bovine).